We begin with the raw amino-acid sequence, 436 residues long: UPF0597 protein YhaM (436 aa).

It belongs to the UPF0597 family.

This is UPF0597 protein YhaM from Escherichia coli (strain 55989 / EAEC).